A 77-amino-acid chain; its full sequence is Probable [Fe-S]-dependent transcriptional repressor (77 aa).

Iron-sulfur cluster-binding residues include Cys54, Cys59, Cys62, and Cys68.

The protein belongs to the FeoC family.

In terms of biological role, may function as a transcriptional regulator that controls feoABC expression. This Proteus mirabilis (strain HI4320) protein is Probable [Fe-S]-dependent transcriptional repressor.